Here is a 145-residue protein sequence, read N- to C-terminus: Protein FimA (145 aa).

It belongs to the fimbrial protein family.

It is found in the fimbrium. This Bordetella pertussis protein is Protein FimA (fimA).